The following is a 293-amino-acid chain: Beta-lactamase (293 aa).

The first 27 residues, Met1–Ala27, serve as a signal peptide directing secretion. The Acyl-ester intermediate role is filled by Ser74. Substrate is bound at residue Lys238–Gly240.

The protein belongs to the class-A beta-lactamase family.

The protein resides in the periplasm. It carries out the reaction a beta-lactam + H2O = a substituted beta-amino acid. Its function is as follows. Hydrolyzes beta-lactams antibiotics. Rates of hydrolysis relative to benzylpenicillin =100: ampicillin = 27, carbenicillin = 25, cloxacillin = 0, cephaloridine = 4. This is Beta-lactamase from Rhodobacter capsulatus (Rhodopseudomonas capsulata).